We begin with the raw amino-acid sequence, 224 residues long: ATP synthase subunit b (224 aa).

Residues 2-22 (TPSLGLIFWQSVIFLISFIIL) traverse the membrane as a helical segment.

The protein belongs to the ATPase B chain family. F-type ATPases have 2 components, F(1) - the catalytic core - and F(0) - the membrane proton channel. F(1) has five subunits: alpha(3), beta(3), gamma(1), delta(1), epsilon(1). F(0) has three main subunits: a(1), b(2) and c(10-14). The alpha and beta chains form an alternating ring which encloses part of the gamma chain. F(1) is attached to F(0) by a central stalk formed by the gamma and epsilon chains, while a peripheral stalk is formed by the delta and b chains.

It is found in the cell membrane. F(1)F(0) ATP synthase produces ATP from ADP in the presence of a proton or sodium gradient. F-type ATPases consist of two structural domains, F(1) containing the extramembraneous catalytic core and F(0) containing the membrane proton channel, linked together by a central stalk and a peripheral stalk. During catalysis, ATP synthesis in the catalytic domain of F(1) is coupled via a rotary mechanism of the central stalk subunits to proton translocation. Functionally, component of the F(0) channel, it forms part of the peripheral stalk, linking F(1) to F(0). This chain is ATP synthase subunit b, found in Karelsulcia muelleri (strain GWSS) (Sulcia muelleri).